A 189-amino-acid polypeptide reads, in one-letter code: GTPase NRas (189 aa).

GTP is bound at residue 10–17; the sequence is GAGGVGKS. Residues 32 to 40 carry the Effector region motif; that stretch reads YDPTIEDSY. Residues 57–61 and 116–119 each bind GTP; these read DTAGQ and NKCD. The hypervariable region stretch occupies residues 166–185; sequence YRMKKLNSNEDGNQGCMGLS. The S-palmitoyl cysteine moiety is linked to residue Cys-181. Cys-186 is lipidated: S-farnesyl cysteine. Residues 187-189 constitute a propeptide, removed in mature form; it reads IVM.

This sequence belongs to the small GTPase superfamily. Ras family. In terms of processing, palmitoylated by the ZDHHC9-GOLGA7 complex. Depalmitoylated by ABHD17A, ABHD17B and ABHD17C. A continuous cycle of de- and re-palmitoylation regulates rapid exchange between plasma membrane and Golgi.

Its subcellular location is the cell membrane. It is found in the golgi apparatus membrane. The catalysed reaction is GTP + H2O = GDP + phosphate + H(+). Its activity is regulated as follows. Alternates between an inactive form bound to GDP and an active form bound to GTP. Activated by a guanine nucleotide-exchange factor (GEF) and inactivated by a GTPase-activating protein (GAP). Ras proteins bind GDP/GTP and possess intrinsic GTPase activity. In Gallus gallus (Chicken), this protein is GTPase NRas (NRAS).